A 533-amino-acid chain; its full sequence is DELLA protein 2 (533 aa).

Residues 1–12 (MKREHKLEHEDM) show a composition bias toward basic and acidic residues. Positions 1–24 (MKREHKLEHEDMSSGSGKSGVCWE) are disordered. The DELLA motif signature appears at 31–35 (DELLA). The GRAS domain maps to 157 to 522 (VETQEKGIRL…RPLIATSAWK (366 aa)). Residues 164–218 (IRLVHSLMACAEAVEQNNLKMAEALVKQIGYLAVSQEGAMRKVATYFAEGLARRI) are leucine repeat I (LRI). The interval 166–203 (LVHSLMACAEAVEQNNLKMAEALVKQIGYLAVSQEGAM) is required for possible homodimerization. The short motif at 171–175 (MACAE) is the LxCxE motif; degenerate element. The VHIID stretch occupies residues 232–297 (QIHFYETCPN…GGPPAFRLTG (66 aa)). Residues 263 to 267 (VHVID) carry the VHIID motif. The tract at residues 311 to 343 (QVGWRLAQFAQTIHVQFEYRGFVANSLADLDAS) is leucine repeat II (LRII). The interval 355-443 (VAVNSVFELH…EVYLGKQICN (89 aa)) is PFYRE. Positions 363–367 (LHKLN) match the LXXLL motif; degenerate motif. An SAW region spans residues 446–522 (ACEGTDRVER…RPLIATSAWK (77 aa)).

The protein belongs to the GRAS family. DELLA subfamily. May be a homodimer. Ubiquitinated. Upon GA application it is ubiquitinated, leading to its subsequent degradation.

Its subcellular location is the nucleus. Its function is as follows. Probable transcriptional regulator that acts as a repressor of the gibberellin (GA) signaling pathway. Probably acts by participating in large multiprotein complexes that repress transcription of GA-inducible genes. Upon GA application, it is degraded by the proteasome, allowing the GA signaling pathway. Together with DELLA1, required to enable arbuscule development during arbuscular mycorrhizal (AM) symbiosis with AM fungi (e.g. Glomus versiforme) via the regulation of RAM1 which, in turn, regulates various AM genes (e.g. NSP1, NSP2, PT4, LEC5, RAM2, EXO70I, STR and RAD1). The polypeptide is DELLA protein 2 (Medicago truncatula (Barrel medic)).